Reading from the N-terminus, the 324-residue chain is NAD(P)H-dependent D-xylose reductase xyl1 (324 aa).

The Proton donor role is filled by Tyr-50. Residue His-112 coordinates substrate. Residues 168-169, 217-226, and 273-283 each bind NAD(+); these read SN, SSFGPTGFME, and KTSRPEVMAQN.

It belongs to the aldo/keto reductase family.

It catalyses the reaction an alditol + NAD(+) = an aldose + NADH + H(+). It carries out the reaction an alditol + NADP(+) = an aldose + NADPH + H(+). The catalysed reaction is xylitol + NAD(+) = D-xylose + NADH + H(+). The enzyme catalyses xylitol + NADP(+) = D-xylose + NADPH + H(+). Its pathway is carbohydrate metabolism; D-xylose degradation. It functions in the pathway carbohydrate degradation; L-arabinose degradation via L-arabinitol; D-xylulose 5-phosphate from L-arabinose (fungal route): step 1/5. Catalyzes the initial reaction in the xylose utilization pathway by reducing D-xylose into xylitol. Xylose is a major component of hemicelluloses such as xylan. Most fungi utilize D-xylose via three enzymatic reactions, xylose reductase (XR), xylitol dehydrogenase (XDH), and xylulokinase, to form xylulose 5-phosphate, which enters pentose phosphate pathway. Also major aldose reductase in pentose and D-galactose catabolism. Reduces the pentose L-arabinose and the hexose D-galactose to their respective polyols. Responsible for extracellular beta-galactosidase formation and cellulase induction during growth on lactose. The chain is NAD(P)H-dependent D-xylose reductase xyl1 (xyl1) from Hypocrea jecorina (Trichoderma reesei).